A 156-amino-acid chain; its full sequence is 6,7-dimethyl-8-ribityllumazine synthase (156 aa).

5-amino-6-(D-ribitylamino)uracil is bound by residues F22, 57–59 (AVE), and 81–83 (CVI). 86-87 (GT) is a binding site for (2S)-2-hydroxy-3-oxobutyl phosphate. H89 serves as the catalytic Proton donor. Residue F114 participates in 5-amino-6-(D-ribitylamino)uracil binding. R128 provides a ligand contact to (2S)-2-hydroxy-3-oxobutyl phosphate.

It belongs to the DMRL synthase family. Forms an icosahedral capsid composed of 60 subunits, arranged as a dodecamer of pentamers.

The enzyme catalyses (2S)-2-hydroxy-3-oxobutyl phosphate + 5-amino-6-(D-ribitylamino)uracil = 6,7-dimethyl-8-(1-D-ribityl)lumazine + phosphate + 2 H2O + H(+). It participates in cofactor biosynthesis; riboflavin biosynthesis; riboflavin from 2-hydroxy-3-oxobutyl phosphate and 5-amino-6-(D-ribitylamino)uracil: step 1/2. Its function is as follows. Catalyzes the formation of 6,7-dimethyl-8-ribityllumazine by condensation of 5-amino-6-(D-ribitylamino)uracil with 3,4-dihydroxy-2-butanone 4-phosphate. This is the penultimate step in the biosynthesis of riboflavin. This chain is 6,7-dimethyl-8-ribityllumazine synthase, found in Tolumonas auensis (strain DSM 9187 / NBRC 110442 / TA 4).